Reading from the N-terminus, the 751-residue chain is Proton-associated sugar transporter A (751 aa).

6 helical membrane-spanning segments follow: residues 93–113, 123–143, 155–175, 191–211, 233–253, and 268–288; these read ILFG…PVLL, SLVW…LGAW, RPFI…LLNG, WGIL…DSAD, IHAL…GIHW, and VIYV…LISI. The residue at position 500 (Thr500) is a Phosphothreonine. Helical transmembrane passes span 536–556, 576–596, 606–626, 630–650, 688–708, and 710–730; these read GWLS…EVVF, VTMG…YSAI, VRTL…LATL, LYVV…LCTL, FLAQ…VGSA, and GVMY…SLCV.

It belongs to the glycoside-pentoside-hexuronide (GPH) cation symporter transporter (TC 2.A.2) family.

It localises to the membrane. It carries out the reaction D-galactose(in) + H(+)(in) = D-galactose(out) + H(+)(out). The catalysed reaction is D-glucose(out) + H(+)(out) = D-glucose(in) + H(+)(in). Functionally, proton-associated glucose transporter in the brain. In Mus musculus (Mouse), this protein is Proton-associated sugar transporter A.